The sequence spans 355 residues: Protein FIP1 (355 aa).

4 helical membrane-spanning segments follow: residues 42 to 62, 72 to 92, 113 to 133, and 149 to 169; these read YLYMLLLAGYAILAAGAPWMF, LLCCCDVALLVVTGVFQQYFV, VVRLPFAIAAYGTAAMLLVIV, and IIMLVEAVGAGFFMGLYIGYV. The stretch at 220–337 forms a coiled coil; it reads LHFLSEEILC…RMSNSELQKE (118 aa). Over residues 331–340 the composition is skewed to basic and acidic residues; the sequence is NSELQKEVAS. The interval 331–355 is disordered; that stretch reads NSELQKEVASTRRKQMLETTTSEQP.

This sequence belongs to the TMEM192 family. As to quaternary structure, interacts with FRI.

The protein localises to the membrane. The protein is Protein FIP1 of Arabidopsis thaliana (Mouse-ear cress).